We begin with the raw amino-acid sequence, 685 residues long: Kinesin-related protein 11 (685 aa).

One can recognise a Kinesin motor domain in the interval 4–405; it reads NISVSVRARP…LKFASRAKKI (402 aa). A disordered region spans residues 36-105; sequence TSLPPPITQP…TTVPASPAPT (70 aa). Low complexity predominate over residues 47 to 105; it reads SSLPPISTPIKSSSSSSTSTSAGSLKTPLKTPLKTPLKTPLKTNSTTTNTTVPASPAPT. 156-163 lines the ATP pocket; the sequence is GITSSGKT. Positions 411-488 form a coiled coil; sequence VNEILDDKAL…KINNLNKLIL (78 aa). The disordered stretch occupies residues 495–568; that stretch reads NSASKGGSGS…QSTSSLTIGG (74 aa). Positions 511-520 are enriched in polar residues; it reads RSTFVSPSQN. Positions 533–565 are enriched in low complexity; that stretch reads PNSFSNLLLQSPSQNNNNNSHISPLSQSTSSLT. Positions 574 to 683 form a coiled coil; the sequence is FESNELIQIQ…LKSKIQEYEV (110 aa).

This sequence belongs to the TRAFAC class myosin-kinesin ATPase superfamily. Kinesin family.

It localises to the cytoplasm. It is found in the cytoskeleton. Functionally, microtubule-associated force-producing protein that plays a role in organelle transport. Its motor activity is directed toward the microtubule's plus end. The sequence is that of Kinesin-related protein 11 (kif11) from Dictyostelium discoideum (Social amoeba).